The primary structure comprises 431 residues: Serine--tRNA ligase (431 aa).

236–238 (TAE) serves as a coordination point for L-serine. 267 to 269 (RSE) contributes to the ATP binding site. Residue glutamate 290 participates in L-serine binding. ATP is bound at residue 354–357 (EISS). Serine 389 contacts L-serine.

It belongs to the class-II aminoacyl-tRNA synthetase family. Type-1 seryl-tRNA synthetase subfamily. As to quaternary structure, homodimer. The tRNA molecule binds across the dimer.

It localises to the cytoplasm. It catalyses the reaction tRNA(Ser) + L-serine + ATP = L-seryl-tRNA(Ser) + AMP + diphosphate + H(+). The catalysed reaction is tRNA(Sec) + L-serine + ATP = L-seryl-tRNA(Sec) + AMP + diphosphate + H(+). The protein operates within aminoacyl-tRNA biosynthesis; selenocysteinyl-tRNA(Sec) biosynthesis; L-seryl-tRNA(Sec) from L-serine and tRNA(Sec): step 1/1. Catalyzes the attachment of serine to tRNA(Ser). Is also able to aminoacylate tRNA(Sec) with serine, to form the misacylated tRNA L-seryl-tRNA(Sec), which will be further converted into selenocysteinyl-tRNA(Sec). The polypeptide is Serine--tRNA ligase (Herminiimonas arsenicoxydans).